Consider the following 56-residue polypeptide: Large ribosomal subunit protein bL33 (56 aa).

Belongs to the bacterial ribosomal protein bL33 family.

The chain is Large ribosomal subunit protein bL33 from Nocardioides sp. (strain ATCC BAA-499 / JS614).